The primary structure comprises 414 residues: Histidine--tRNA ligase (414 aa).

The protein belongs to the class-II aminoacyl-tRNA synthetase family. As to quaternary structure, homodimer.

The protein localises to the cytoplasm. The catalysed reaction is tRNA(His) + L-histidine + ATP = L-histidyl-tRNA(His) + AMP + diphosphate + H(+). This is Histidine--tRNA ligase from Mycoplasma mycoides subsp. mycoides SC (strain CCUG 32753 / NCTC 10114 / PG1).